The primary structure comprises 337 residues: Glyceraldehyde-3-phosphate dehydrogenase (337 aa).

NAD(+) is bound by residues 12 to 13, Asp-34, Arg-78, and Thr-121; that span reads RI. Residues 151-153, Thr-182, Arg-199, 212-213, and Arg-235 contribute to the D-glyceraldehyde 3-phosphate site; these read SCT and SG. Cys-152 functions as the Nucleophile in the catalytic mechanism. Asn-317 contacts NAD(+).

It belongs to the glyceraldehyde-3-phosphate dehydrogenase family. In terms of assembly, homotetramer.

Its subcellular location is the cytoplasm. It catalyses the reaction D-glyceraldehyde 3-phosphate + phosphate + NAD(+) = (2R)-3-phospho-glyceroyl phosphate + NADH + H(+). It functions in the pathway carbohydrate degradation; glycolysis; pyruvate from D-glyceraldehyde 3-phosphate: step 1/5. In terms of biological role, catalyzes the oxidative phosphorylation of glyceraldehyde 3-phosphate (G3P) to 1,3-bisphosphoglycerate (BPG) using the cofactor NAD. The first reaction step involves the formation of a hemiacetal intermediate between G3P and a cysteine residue, and this hemiacetal intermediate is then oxidized to a thioester, with concomitant reduction of NAD to NADH. The reduced NADH is then exchanged with the second NAD, and the thioester is attacked by a nucleophilic inorganic phosphate to produce BPG. In Lactococcus lactis subsp. lactis (strain IL1403) (Streptococcus lactis), this protein is Glyceraldehyde-3-phosphate dehydrogenase (gap).